We begin with the raw amino-acid sequence, 248 residues long: 3-deoxy-manno-octulosonate cytidylyltransferase (248 aa).

Belongs to the KdsB family.

Its subcellular location is the cytoplasm. It carries out the reaction 3-deoxy-alpha-D-manno-oct-2-ulosonate + CTP = CMP-3-deoxy-beta-D-manno-octulosonate + diphosphate. It functions in the pathway nucleotide-sugar biosynthesis; CMP-3-deoxy-D-manno-octulosonate biosynthesis; CMP-3-deoxy-D-manno-octulosonate from 3-deoxy-D-manno-octulosonate and CTP: step 1/1. The protein operates within bacterial outer membrane biogenesis; lipopolysaccharide biosynthesis. In terms of biological role, activates KDO (a required 8-carbon sugar) for incorporation into bacterial lipopolysaccharide in Gram-negative bacteria. In Escherichia coli (strain K12 / MC4100 / BW2952), this protein is 3-deoxy-manno-octulosonate cytidylyltransferase.